Reading from the N-terminus, the 374-residue chain is Chaperone protein DnaJ (374 aa).

Positions 6–71 (DYYAVLEVTR…QKRAAYDRFG (66 aa)) constitute a J domain. The CR-type zinc finger occupies 130-209 (GVKKPITVPT…CHGAGTVERE (80 aa)). 8 residues coordinate Zn(2+): C143, C146, C161, C164, C183, C186, C197, and C200. 4 CXXCXGXG motif repeats span residues 143–150 (CESCEGTG), 161–168 (CPTCHGAG), 183–190 (CPTCHGAG), and 197–204 (CAACHGAG).

Belongs to the DnaJ family. As to quaternary structure, homodimer. It depends on Zn(2+) as a cofactor.

The protein resides in the cytoplasm. Participates actively in the response to hyperosmotic and heat shock by preventing the aggregation of stress-denatured proteins and by disaggregating proteins, also in an autonomous, DnaK-independent fashion. Unfolded proteins bind initially to DnaJ; upon interaction with the DnaJ-bound protein, DnaK hydrolyzes its bound ATP, resulting in the formation of a stable complex. GrpE releases ADP from DnaK; ATP binding to DnaK triggers the release of the substrate protein, thus completing the reaction cycle. Several rounds of ATP-dependent interactions between DnaJ, DnaK and GrpE are required for fully efficient folding. Also involved, together with DnaK and GrpE, in the DNA replication of plasmids through activation of initiation proteins. The protein is Chaperone protein DnaJ of Gluconacetobacter diazotrophicus (strain ATCC 49037 / DSM 5601 / CCUG 37298 / CIP 103539 / LMG 7603 / PAl5).